A 309-amino-acid chain; its full sequence is Probable copper-dependent oxygenase clz3 (309 aa).

Asn9 and Asn249 each carry an N-linked (GlcNAc...) asparagine glycan. The chain crosses the membrane as a helical span at residues 257 to 277; that stretch reads FAVPLAAIAFIALIISGGYVI.

The protein belongs to the clz3 oxygenase family.

The protein localises to the membrane. It participates in secondary metabolite biosynthesis. In terms of biological role, probable copper-dependent oxygenase; part of the gene cluster that mediates the biosynthesis of squalestatin S1 (SQS1, also known as zaragozic acid A), a heavily oxidized fungal polyketide that offers potent cholesterol lowering activity by targeting squalene synthase (SS). SQS1 is composed of a 2,8-dioxobicyclic[3.2.1]octane-3,4,5-tricarboxyclic acid core that is connected to two lipophilic polyketide arms. These initial steps feature the priming of an unusual benzoic acid starter unit onto the highly reducing polyketide synthase clz14, followed by oxaloacetate extension and product release to generate a tricarboxylic acid containing product. The phenylalanine ammonia lyase (PAL) clz10 and the acyl-CoA ligase clz12 are involved in transforming phenylalanine into benzoyl-CoA. The citrate synthase-like protein clz17 is involved in connecting the C-alpha-carbons of the hexaketide chain and oxaloacetate to afford the tricarboxylic acid unit. The potential hydrolytic enzymes, clz11 and clz13, are in close proximity to pks2 and may participate in product release. On the other side, the tetraketide arm is synthesized by a the squalestatin tetraketide synthase clz2 and enzymatically esterified to the core in the last biosynthetic step, by the acetyltransferase clz6. The biosynthesis of the tetraketide must involve 3 rounds of chain extension. After the first and second rounds methyl-transfer occurs, and in all rounds of extension the ketoreductase and dehydratase are active. The enoyl reductase and C-MeT of clz2 are not active in the final round of extension. The acetyltransferase clz6 appears to have a broad substrate selectivity for its acyl CoA substrate, allowing the in vitro synthesis of novel squalestatins. The biosynthesis of SQS1 requires several oxidative steps likely performed by oxidoreductases clz3, clz15 and clz16. Finally, in support of the identification of the cluster as being responsible for SQS1 production, the cluster contains a gene encoding a putative squalene synthase (SS) clz20, suggesting a likely mechanism for self-resistance. The protein is Probable copper-dependent oxygenase clz3 of Cochliobolus lunatus (Filamentous fungus).